Consider the following 246-residue polypeptide: 1-(5-phosphoribosyl)-5-[(5-phosphoribosylamino)methylideneamino] imidazole-4-carboxamide isomerase (246 aa).

The Proton acceptor role is filled by D8. The active-site Proton donor is the D131.

The protein belongs to the HisA/HisF family.

It localises to the cytoplasm. It carries out the reaction 1-(5-phospho-beta-D-ribosyl)-5-[(5-phospho-beta-D-ribosylamino)methylideneamino]imidazole-4-carboxamide = 5-[(5-phospho-1-deoxy-D-ribulos-1-ylimino)methylamino]-1-(5-phospho-beta-D-ribosyl)imidazole-4-carboxamide. The protein operates within amino-acid biosynthesis; L-histidine biosynthesis; L-histidine from 5-phospho-alpha-D-ribose 1-diphosphate: step 4/9. This is 1-(5-phosphoribosyl)-5-[(5-phosphoribosylamino)methylideneamino] imidazole-4-carboxamide isomerase from Bordetella petrii (strain ATCC BAA-461 / DSM 12804 / CCUG 43448).